A 20-amino-acid polypeptide reads, in one-letter code: Non-secretory ribonuclease (20 aa).

Residue H16 is the Proton acceptor of the active site.

Belongs to the pancreatic ribonuclease family. Interacts with and forms a tight 1:1 complex with RNH1. Dimerization of two such complexes may occur.

The protein resides in the lysosome. Its subcellular location is the cytoplasmic granule. It catalyses the reaction an [RNA] containing cytidine + H2O = an [RNA]-3'-cytidine-3'-phosphate + a 5'-hydroxy-ribonucleotide-3'-[RNA].. The enzyme catalyses an [RNA] containing uridine + H2O = an [RNA]-3'-uridine-3'-phosphate + a 5'-hydroxy-ribonucleotide-3'-[RNA].. Its function is as follows. This is a non-secretory ribonuclease. It is a pyrimidine specific nuclease with a slight preference for U. Cytotoxin and helminthotoxin. Possesses a wide variety of biological activities. This is Non-secretory ribonuclease (RNASE2) from Sus scrofa (Pig).